Here is a 151-residue protein sequence, read N- to C-terminus: UPF0178 protein PFL_5989 (151 aa).

The protein belongs to the UPF0178 family.

The chain is UPF0178 protein PFL_5989 from Pseudomonas fluorescens (strain ATCC BAA-477 / NRRL B-23932 / Pf-5).